Here is a 546-residue protein sequence, read N- to C-terminus: Chaperonin GroEL 2 (546 aa).

ATP is bound by residues 30–33, lysine 51, 87–91, glycine 415, 479–481, and aspartate 495; these read TLGP, DGTTT, and NAA.

Belongs to the chaperonin (HSP60) family. Forms a cylinder of 14 subunits composed of two heptameric rings stacked back-to-back. Interacts with the co-chaperonin GroES.

The protein localises to the cytoplasm. The catalysed reaction is ATP + H2O + a folded polypeptide = ADP + phosphate + an unfolded polypeptide.. In terms of biological role, together with its co-chaperonin GroES, plays an essential role in assisting protein folding. The GroEL-GroES system forms a nano-cage that allows encapsulation of the non-native substrate proteins and provides a physical environment optimized to promote and accelerate protein folding. This Chromobacterium violaceum (strain ATCC 12472 / DSM 30191 / JCM 1249 / CCUG 213 / NBRC 12614 / NCIMB 9131 / NCTC 9757 / MK) protein is Chaperonin GroEL 2.